We begin with the raw amino-acid sequence, 95 residues long: Progonadoliberin-1 (95 aa).

Residues Met1–Cys23 form the signal peptide. Gln24 carries the post-translational modification Pyrrolidone carboxylic acid. Residue Gly33 is modified to Glycine amide.

This sequence belongs to the GnRH family.

It localises to the secreted. In terms of biological role, stimulates the secretion of gonadotropins. This is Progonadoliberin-1 (gnrh1) from Pagrus major (Red sea bream).